The primary structure comprises 389 residues: Alkanesulfonate monooxygenase (389 aa).

This sequence belongs to the SsuD family.

The enzyme catalyses an alkanesulfonate + FMNH2 + O2 = an aldehyde + FMN + sulfite + H2O + 2 H(+). Functionally, catalyzes the desulfonation of aliphatic sulfonates. This is Alkanesulfonate monooxygenase from Agrobacterium fabrum (strain C58 / ATCC 33970) (Agrobacterium tumefaciens (strain C58)).